Here is a 336-residue protein sequence, read N- to C-terminus: Tryptophan--tRNA ligase (336 aa).

Residues 16–18 and 24–25 contribute to the ATP site; these read QPT and GN. A 'HIGH' region motif is present at residues 17–25; that stretch reads PTGQLHLGN. L-tryptophan is bound at residue D140. ATP-binding positions include 152 to 154, V191, and 200 to 204; these read GED and KMSKS. Positions 200–204 match the 'KMSKS' region motif; sequence KMSKS.

This sequence belongs to the class-I aminoacyl-tRNA synthetase family. As to quaternary structure, homodimer.

The protein localises to the cytoplasm. It catalyses the reaction tRNA(Trp) + L-tryptophan + ATP = L-tryptophyl-tRNA(Trp) + AMP + diphosphate + H(+). Its function is as follows. Catalyzes the attachment of tryptophan to tRNA(Trp). The chain is Tryptophan--tRNA ligase from Gloeobacter violaceus (strain ATCC 29082 / PCC 7421).